The primary structure comprises 410 residues: Tryptophan synthase beta chain (410 aa).

Lys99 carries the post-translational modification N6-(pyridoxal phosphate)lysine.

This sequence belongs to the TrpB family. As to quaternary structure, tetramer of two alpha and two beta chains. Pyridoxal 5'-phosphate serves as cofactor.

The catalysed reaction is (1S,2R)-1-C-(indol-3-yl)glycerol 3-phosphate + L-serine = D-glyceraldehyde 3-phosphate + L-tryptophan + H2O. It functions in the pathway amino-acid biosynthesis; L-tryptophan biosynthesis; L-tryptophan from chorismate: step 5/5. The beta subunit is responsible for the synthesis of L-tryptophan from indole and L-serine. This chain is Tryptophan synthase beta chain, found in Pseudomonas fluorescens (strain Pf0-1).